The sequence spans 295 residues: Pyridoxal 5'-phosphate synthase subunit PdxS (295 aa).

Aspartate 25 serves as a coordination point for D-ribose 5-phosphate. The Schiff-base intermediate with D-ribose 5-phosphate role is filled by lysine 82. Glycine 154 provides a ligand contact to D-ribose 5-phosphate. Arginine 166 is a binding site for D-glyceraldehyde 3-phosphate. D-ribose 5-phosphate contacts are provided by residues glycine 215 and 236–237; that span reads GS.

Belongs to the PdxS/SNZ family. As to quaternary structure, in the presence of PdxT, forms a dodecamer of heterodimers.

The catalysed reaction is aldehydo-D-ribose 5-phosphate + D-glyceraldehyde 3-phosphate + L-glutamine = pyridoxal 5'-phosphate + L-glutamate + phosphate + 3 H2O + H(+). The protein operates within cofactor biosynthesis; pyridoxal 5'-phosphate biosynthesis. Its function is as follows. Catalyzes the formation of pyridoxal 5'-phosphate from ribose 5-phosphate (RBP), glyceraldehyde 3-phosphate (G3P) and ammonia. The ammonia is provided by the PdxT subunit. Can also use ribulose 5-phosphate and dihydroxyacetone phosphate as substrates, resulting from enzyme-catalyzed isomerization of RBP and G3P, respectively. The polypeptide is Pyridoxal 5'-phosphate synthase subunit PdxS (Shouchella clausii (strain KSM-K16) (Alkalihalobacillus clausii)).